The following is a 196-amino-acid chain: Cell division protein SepF (196 aa).

The tract at residues 15–80 is disordered; sequence VEDDEEFNEP…PKRSASTFSK (66 aa). The span at 56 to 79 shows a compositional bias: polar residues; it reads RPAQSTPKPQAQTAAPKRSASTFS.

This sequence belongs to the SepF family. Homodimer. Interacts with FtsZ.

The protein localises to the cytoplasm. Functionally, cell division protein that is part of the divisome complex and is recruited early to the Z-ring. Probably stimulates Z-ring formation, perhaps through the cross-linking of FtsZ protofilaments. Its function overlaps with FtsA. The sequence is that of Cell division protein SepF from Lactococcus lactis subsp. cremoris (strain SK11).